The chain runs to 65 residues: Metallothionein-like protein type 3 (65 aa).

It belongs to the metallothionein superfamily. Type 15 family.

Its function is as follows. Metallothioneins have a high content of cysteine residues that bind various heavy metals. This Carica papaya (Papaya) protein is Metallothionein-like protein type 3.